We begin with the raw amino-acid sequence, 981 residues long: Ubiquitin carboxyl-terminal hydrolase 37 (981 aa).

The KEN box 1 signature appears at 32–34; the sequence is KEN. Short sequence motifs (D-box) lie at residues 71–79 and 96–105; these read RLMLTLQDN and RLFLDAVHQN. Residues 111 to 308 form a disordered region; it reads MKPSQGSGSF…SAKRSLGFLP (198 aa). Phosphoserine is present on Ser114. Positions 135-148 are enriched in polar residues; the sequence is RQLSYSDNQASSKR. Positions 149–159 are enriched in basic and acidic residues; it reads GSLETKDDIPF. Positions 160-168 match the D-box 3 motif; it reads RKVLGNPGR. Ser170 carries the post-translational modification Phosphoserine. Positions 172 to 195 are enriched in polar residues; that stretch reads KTATGSGITVTRTIPSLTSASTPL. Ser212 bears the Phosphoserine mark. The KEN box 2 motif lies at 223–225; the sequence is KEN. The span at 245-259 shows a compositional bias: basic and acidic residues; the sequence is SREKQLSLKQSEENR. Residues 266–300 show a composition bias toward polar residues; that stretch reads LQSSSFYGSRTGSKDYSSGSTNLDRTNVSGQTPSA. In terms of domain architecture, USP spans 343-953; the sequence is QGFSNLGNTC…SGYIFFYMHK (611 aa). Residue Cys352 is the Nucleophile of the active site. Ser630 is modified (phosphoserine; by CDK2). 2 positions are modified to phosphoserine: Ser652 and Ser654. Disordered stretches follow at residues 673–704 and 719–831; these read GCEQ…GFDG and KREA…EQKE. Basic and acidic residues-rich tracts occupy residues 683–697 and 719–734; these read KDSK…KSEL and KREA…DDKP. The 20-residue stretch at 706-725 folds into the UIM 1 domain; the sequence is SEEELLAAVLEMSKREASPT. At Ser772 the chain carries Phosphoserine. The span at 776–788 shows a compositional bias: basic and acidic residues; the sequence is ITKDCDENKENKT. A KEN box 3 motif is present at residues 784 to 786; sequence KEN. 2 consecutive UIM domains span residues 808–827 and 830–849; these read REEQ…QEAW and KEDD…FNNS. Residues 813–824 show a composition bias toward low complexity; it reads LQQALAQSLQEQ. His908 serves as the catalytic Proton acceptor.

This sequence belongs to the peptidase C19 family. In terms of assembly, interacts with FZR1/CDH1. Interacts with CDT1. Post-translationally, polyubiquitinated via 'Lys-11'-linked ubiquitin by the APC(CDH1) complex during late mitosis, leading to its degradation. Able to mediate auto-deubiquitination. Phosphorylated at Ser-630 by CDK2 during G1/S phase but not during mitosis; phosphorylation at Ser-630 is required for deubiquitinase activity. Also polyubiquitinated during early G1 phase, without leading to degradation. Phosphorylated at Ser-114 by ATM following DNA damage, which in turn increases its deubiquitination activity towards BLM.

Its subcellular location is the nucleus. It localises to the chromosome. It carries out the reaction Thiol-dependent hydrolysis of ester, thioester, amide, peptide and isopeptide bonds formed by the C-terminal Gly of ubiquitin (a 76-residue protein attached to proteins as an intracellular targeting signal).. Its function is as follows. Deubiquitinase that plays a role in different processes including cell cycle regulation, DNA replication or DNA damage response. Antagonizes the anaphase-promoting complex (APC/C) during G1/S transition by mediating deubiquitination of cyclin-A (CCNA1 and CCNA2), thereby promoting S phase entry. Specifically mediates deubiquitination of 'Lys-11'-linked polyubiquitin chains, a specific ubiquitin-linkage type mediated by the APC/C complex. Phosphorylation at Ser-628 during G1/S phase maximizes the deubiquitinase activity, leading to prevent degradation of cyclin-A (CCNA1 and CCNA2). Plays an important role in the regulation of DNA replication by stabilizing the licensing factor CDT1. Also plays an essential role beyond S-phase entry to promote the efficiency and fidelity of replication by deubiquitinating checkpoint kinase 1/CHK1, promoting its stability. Sustains the DNA damage response (DDR) by deubiquitinating and stabilizing the ATP-dependent DNA helicase BLM. Mechanistically, DNA double-strand breaks (DSB) promotes ATM-mediated phosphorylation of USP37 and enhances the binding between USP37 and BLM. Promotes cell migration by deubiquitinating and stabilizing the epithelial-mesenchymal transition (EMT)-inducing transcription factor SNAI. Plays a role in the regulation of mitotic spindle assembly and mitotic progression by associating with chromatin-associated WAPL and stabilizing it through deubiquitination. The polypeptide is Ubiquitin carboxyl-terminal hydrolase 37 (USP37) (Canis lupus familiaris (Dog)).